The chain runs to 121 residues: Small ribosomal subunit protein uS12 (121 aa).

The segment at 1 to 25 (MPTINQLVRKNRKQKKSQSKSPVLE) is disordered. Residues 9–18 (RKNRKQKKSQ) are compositionally biased toward basic residues. The residue at position 89 (D89) is a 3-methylthioaspartic acid.

It belongs to the universal ribosomal protein uS12 family. In terms of assembly, part of the 30S ribosomal subunit. Contacts proteins S8 and S17. May interact with IF1 in the 30S initiation complex.

Functionally, with S4 and S5 plays an important role in translational accuracy. In terms of biological role, interacts with and stabilizes bases of the 16S rRNA that are involved in tRNA selection in the A site and with the mRNA backbone. Located at the interface of the 30S and 50S subunits, it traverses the body of the 30S subunit contacting proteins on the other side and probably holding the rRNA structure together. The combined cluster of proteins S8, S12 and S17 appears to hold together the shoulder and platform of the 30S subunit. The sequence is that of Small ribosomal subunit protein uS12 from Rhodopirellula baltica (strain DSM 10527 / NCIMB 13988 / SH1).